Reading from the N-terminus, the 275-residue chain is NH(3)-dependent NAD(+) synthetase (275 aa).

ATP is bound at residue 46 to 53; sequence GISGGQDS. Asp52 contacts Mg(2+). Deamido-NAD(+) is bound at residue Arg140. An ATP-binding site is contributed by Thr160. Position 165 (Glu165) interacts with Mg(2+). Residues Lys173 and Asp180 each contribute to the deamido-NAD(+) site. Residues Lys189 and Thr211 each coordinate ATP. 260–261 is a deamido-NAD(+) binding site; it reads HK.

Belongs to the NAD synthetase family. Homodimer.

It catalyses the reaction deamido-NAD(+) + NH4(+) + ATP = AMP + diphosphate + NAD(+) + H(+). Its pathway is cofactor biosynthesis; NAD(+) biosynthesis; NAD(+) from deamido-NAD(+) (ammonia route): step 1/1. Functionally, catalyzes the ATP-dependent amidation of deamido-NAD to form NAD. Uses ammonia as a nitrogen source. In Escherichia coli O6:K15:H31 (strain 536 / UPEC), this protein is NH(3)-dependent NAD(+) synthetase.